Here is a 575-residue protein sequence, read N- to C-terminus: Phosphoenolpyruvate-protein phosphotransferase (575 aa).

H191 serves as the catalytic Tele-phosphohistidine intermediate. Residues R298 and R334 each coordinate phosphoenolpyruvate. Mg(2+) is bound by residues E435 and D459. Phosphoenolpyruvate contacts are provided by residues N458 to D459 and R469. C506 (proton donor) is an active-site residue.

Belongs to the PEP-utilizing enzyme family. In terms of assembly, homodimer. Requires Mg(2+) as cofactor.

It is found in the cytoplasm. The catalysed reaction is L-histidyl-[protein] + phosphoenolpyruvate = N(pros)-phospho-L-histidyl-[protein] + pyruvate. In terms of biological role, general (non sugar-specific) component of the phosphoenolpyruvate-dependent sugar phosphotransferase system (sugar PTS). This major carbohydrate active-transport system catalyzes the phosphorylation of incoming sugar substrates concomitantly with their translocation across the cell membrane. Enzyme I transfers the phosphoryl group from phosphoenolpyruvate (PEP) to the phosphoryl carrier protein (HPr). In Enterococcus faecalis (strain ATCC 700802 / V583), this protein is Phosphoenolpyruvate-protein phosphotransferase (ptsI).